The primary structure comprises 365 residues: Aminomethyltransferase (365 aa).

This sequence belongs to the GcvT family. The glycine cleavage system is composed of four proteins: P, T, L and H.

It carries out the reaction N(6)-[(R)-S(8)-aminomethyldihydrolipoyl]-L-lysyl-[protein] + (6S)-5,6,7,8-tetrahydrofolate = N(6)-[(R)-dihydrolipoyl]-L-lysyl-[protein] + (6R)-5,10-methylene-5,6,7,8-tetrahydrofolate + NH4(+). Its function is as follows. The glycine cleavage system catalyzes the degradation of glycine. The polypeptide is Aminomethyltransferase (Chlorobium phaeovibrioides (strain DSM 265 / 1930) (Prosthecochloris vibrioformis (strain DSM 265))).